The sequence spans 388 residues: GTPase Obg (388 aa).

Residues 1–159 (MKFVDEANIR…RSIKLELLLL (159 aa)) enclose the Obg domain. The OBG-type G domain occupies 160 to 333 (ADVGLLGMPN…LSIKMLDYIR (174 aa)). GTP-binding positions include 166–173 (GMPNAGKS), 191–195 (FTTLV), 213–216 (DIPG), 283–286 (NKTD), and 314–316 (SAY). Residues Ser-173 and Thr-193 each contribute to the Mg(2+) site.

It belongs to the TRAFAC class OBG-HflX-like GTPase superfamily. OBG GTPase family. As to quaternary structure, monomer. Mg(2+) is required as a cofactor.

It is found in the cytoplasm. An essential GTPase which binds GTP, GDP and possibly (p)ppGpp with moderate affinity, with high nucleotide exchange rates and a fairly low GTP hydrolysis rate. Plays a role in control of the cell cycle, stress response, ribosome biogenesis and in those bacteria that undergo differentiation, in morphogenesis control. The polypeptide is GTPase Obg (Shewanella frigidimarina (strain NCIMB 400)).